A 241-amino-acid polypeptide reads, in one-letter code: Urease accessory protein UreF 1 (241 aa).

The protein belongs to the UreF family. UreD, UreF and UreG form a complex that acts as a GTP-hydrolysis-dependent molecular chaperone, activating the urease apoprotein by helping to assemble the nickel containing metallocenter of UreC. The UreE protein probably delivers the nickel.

The protein resides in the cytoplasm. Its function is as follows. Required for maturation of urease via the functional incorporation of the urease nickel metallocenter. This is Urease accessory protein UreF 1 from Brucella melitensis biotype 1 (strain ATCC 23456 / CCUG 17765 / NCTC 10094 / 16M).